Consider the following 130-residue polypeptide: Histone H2A type 2-B (130 aa).

Residues 1-22 (MSGRGKQGGKARAKAKSRSSRA) are disordered. An N-acetylserine modification is found at Ser2. At Ser2 the chain carries Phosphoserine; by RPS6KA5. Citrulline; alternate is present on Arg4. The residue at position 4 (Arg4) is a Symmetric dimethylarginine; by PRMT5; alternate. 2 positions are modified to N6-(2-hydroxyisobutyryl)lysine; alternate: Lys6 and Lys10. N6-(beta-hydroxybutyryl)lysine; alternate is present on Lys6. Positions 7–19 (QGGKARAKAKSRS) are enriched in basic residues. At Lys10 the chain carries N6-lactoyllysine; alternate. Lys10 is subject to N6-succinyllysine; alternate. Residues Lys14 and Lys16 each participate in a glycyl lysine isopeptide (Lys-Gly) (interchain with G-Cter in ubiquitin) cross-link. Lys37 carries the post-translational modification N6-(2-hydroxyisobutyryl)lysine; alternate. Lys37 is modified (N6-(beta-hydroxybutyryl)lysine; alternate). Lys37 carries the N6-crotonyllysine; alternate modification. N6-(2-hydroxyisobutyryl)lysine is present on residues Lys75 and Lys76. N6-(2-hydroxyisobutyryl)lysine; alternate is present on Lys96. Lys96 bears the N6-succinyllysine; alternate mark. The residue at position 96 (Lys96) is an N6-glutaryllysine; alternate. Gln105 is subject to N5-methylglutamine. Lys119 carries the N6-(2-hydroxyisobutyryl)lysine; alternate modification. Residues Lys119 and Lys120 each carry the N6-crotonyllysine; alternate modification. An N6-glutaryllysine; alternate mark is found at Lys119 and Lys120. Lys120 carries the N6-(beta-hydroxybutyryl)lysine; alternate modification. Lys120 is covalently cross-linked (Glycyl lysine isopeptide (Lys-Gly) (interchain with G-Cter in ubiquitin); alternate). Thr121 is subject to Phosphothreonine; by DCAF1.

Belongs to the histone H2A family. In terms of assembly, the nucleosome is a histone octamer containing two molecules each of H2A, H2B, H3 and H4 assembled in one H3-H4 heterotetramer and two H2A-H2B heterodimers. The octamer wraps approximately 147 bp of DNA. Post-translationally, deiminated on Arg-4 in granulocytes upon calcium entry. In terms of processing, monoubiquitination of Lys-120 (H2AK119Ub) by RING1, TRIM37 and RNF2/RING2 complex gives a specific tag for epigenetic transcriptional repression and participates in X chromosome inactivation of female mammals. It is involved in the initiation of both imprinted and random X inactivation. Ubiquitinated H2A is enriched in inactive X chromosome chromatin. Ubiquitination of H2A functions downstream of methylation of 'Lys-27' of histone H3 (H3K27me). H2AK119Ub by RNF2/RING2 can also be induced by ultraviolet and may be involved in DNA repair. Following DNA double-strand breaks (DSBs), it is ubiquitinated through 'Lys-63' linkage of ubiquitin moieties by the E2 ligase UBE2N and the E3 ligases RNF8 and RNF168, leading to the recruitment of repair proteins to sites of DNA damage. Ubiquitination at Lys-14 and Lys-16 (H2AK13Ub and H2AK15Ub, respectively) in response to DNA damage is initiated by RNF168 that mediates monoubiquitination at these 2 sites, and 'Lys-63'-linked ubiquitin are then conjugated to monoubiquitin; RNF8 is able to extend 'Lys-63'-linked ubiquitin chains in vitro. Deubiquitinated by USP51 at Lys-14 and Lys-16 (H2AK13Ub and H2AK15Ub, respectively) after damaged DNA is repaired. H2AK119Ub and ionizing radiation-induced 'Lys-63'-linked ubiquitination (H2AK13Ub and H2AK15Ub) are distinct events. Phosphorylation on Ser-2 (H2AS1ph) is enhanced during mitosis. Phosphorylation on Ser-2 by RPS6KA5/MSK1 directly represses transcription. Acetylation of H3 inhibits Ser-2 phosphorylation by RPS6KA5/MSK1. Phosphorylation at Thr-121 (H2AT120ph) by DCAF1 is present in the regulatory region of many tumor suppresor genes and down-regulates their transcription. Post-translationally, symmetric dimethylation on Arg-4 by the PRDM1/PRMT5 complex may play a crucial role in the germ-cell lineage. In terms of processing, glutamine methylation at Gln-105 (H2AQ104me) by FBL is specifically dedicated to polymerase I. It is present at 35S ribosomal DNA locus and impairs binding of the FACT complex. Crotonylation (Kcr) is specifically present in male germ cells and marks testis-specific genes in post-meiotic cells, including X-linked genes that escape sex chromosome inactivation in haploid cells. Crotonylation marks active promoters and enhancers and confers resistance to transcriptional repressors. It is also associated with post-meiotically activated genes on autosomes. Post-translationally, hydroxybutyrylation of histones is induced by starvation. In terms of processing, lactylated in macrophages by EP300/P300 by using lactoyl-CoA directly derived from endogenous or exogenous lactate, leading to stimulates gene transcription.

The protein resides in the nucleus. It localises to the chromosome. Core component of nucleosome. Nucleosomes wrap and compact DNA into chromatin, limiting DNA accessibility to the cellular machineries which require DNA as a template. Histones thereby play a central role in transcription regulation, DNA repair, DNA replication and chromosomal stability. DNA accessibility is regulated via a complex set of post-translational modifications of histones, also called histone code, and nucleosome remodeling. The sequence is that of Histone H2A type 2-B from Mus musculus (Mouse).